Reading from the N-terminus, the 190-residue chain is MEQDGDQLSARPALETEGLRFLHVTVGSLLATYGWYIVFCCILLYVVFQKLSTRLRALRQRHLDGAAAALEPDVVVKRQEALAAARLKMQEELNAQVEKHKEKLRQLEEEKRRQKIERWDSVQEGRSYRGDARKRQEEDSPGPSTSSVIPKRKSDKKPLRGGGYNPLSGEGGGACSWRPGRRGPSSGGUG.

Residues 28–48 form a helical membrane-spanning segment; the sequence is SLLATYGWYIVFCCILLYVVF. Positions 78–90 are VCP/p97-interacting motif (VIM); the sequence is RQEALAAARLKMQ. Residues 115–138 show a composition bias toward basic and acidic residues; the sequence is KIERWDSVQEGRSYRGDARKRQEE. Positions 115–190 are disordered; sequence KIERWDSVQE…RRGPSSGGUG (76 aa). At Ser140 the chain carries Phosphoserine. Over residues 160 to 174 the composition is skewed to gly residues; sequence RGGGYNPLSGEGGGA. Sec189 is a non-standard amino acid (selenocysteine).

The protein belongs to the selenoprotein S family. In terms of assembly, interacts with DERL1 and (via VIM motif) with VCP, suggesting that it forms a membrane complex with DERL1 that serves as a receptor for VCP. Also interacts with DERL2, DERL3 and SELENOK. The SELENOK-SELENOS complex interacts with VCP. In terms of processing, truncated SELENOS proteins produced by failed UGA/Sec decoding are ubiquitinated by the CRL2(KLHDC2) and CRL2(KLHDC3) complexes, which recognizes the glycine (Gly) at the C-terminus of truncated SELENOS proteins. Truncated SELENOS proteins produced by failed UGA/Sec decoding are also ubiquitinated by the CRL5(KLHDC1) complex. Ubiquitously expressed. Highest expression in liver and lung, with lower levels detected in spleen, kidney, brain, lymph nodes, small intestine, stomach and heart. Very low expression detected in longissimus dorsi.

It is found in the cytoplasm. Its subcellular location is the endoplasmic reticulum membrane. Its function is as follows. Involved in the degradation process of misfolded endoplasmic reticulum (ER) luminal proteins. Participates in the transfer of misfolded proteins from the ER to the cytosol, where they are destroyed by the proteasome in a ubiquitin-dependent manner. Probably acts by serving as a linker between DERL1, which mediates the retrotranslocation of misfolded proteins into the cytosol, and the ATPase complex VCP, which mediates the translocation and ubiquitination. The polypeptide is Selenoprotein S (Sus scrofa (Pig)).